The sequence spans 228 residues: Leucine rich adaptor protein 1-like (228 aa).

The residue at position 1 (M1) is an N-acetylmethionine. A disordered region spans residues 1 to 89; sequence MEDSPLPDLR…GSPRGSHSSA (89 aa). Composition is skewed to basic and acidic residues over residues 8-21 and 28-42; these read DLRD…RKVP and LRGE…DRDP. A compositionally biased stretch (gly residues) spans 44 to 56; sequence GGSGGGGGGGGGC. Residues 57-88 show a composition bias toward low complexity; the sequence is SSSSSYCSFPPSLSSSSSSSPTSGSPRGSHSS.

The polypeptide is Leucine rich adaptor protein 1-like (LURAP1L) (Homo sapiens (Human)).